The chain runs to 238 residues: Ankyrin repeat domain-containing protein 49 (238 aa).

Phosphoserine is present on serine 48. 4 ANK repeats span residues 77 to 105, 106 to 135, 139 to 168, and 172 to 205; these read LLWAAEKNRLTTVQRLLSERATHVNTRDE, DKYTPLHRAAYNGHLDVVRELIAHGADVHA, DGWTPLHSACKWNNARVASFLLQHDADVNA, and GLLTPLHLAAGNRDSKDTLELLLMNRYIKPGLKN.

The protein localises to the nucleus. In terms of biological role, may have a role in spermatogenesis where it promotes autophagy in response to serum starvation, via the NF-kappaB pathway. In Bos taurus (Bovine), this protein is Ankyrin repeat domain-containing protein 49 (ANKRD49).